Here is a 127-residue protein sequence, read N- to C-terminus: Large ribosomal subunit protein eL8 (127 aa).

This sequence belongs to the eukaryotic ribosomal protein eL8 family. As to quaternary structure, part of the 50S ribosomal subunit. Probably part of the RNase P complex.

It is found in the cytoplasm. Multifunctional RNA-binding protein that recognizes the K-turn motif in ribosomal RNA, the RNA component of RNase P, box H/ACA, box C/D and box C'/D' sRNAs. In Picrophilus torridus (strain ATCC 700027 / DSM 9790 / JCM 10055 / NBRC 100828 / KAW 2/3), this protein is Large ribosomal subunit protein eL8.